Reading from the N-terminus, the 209-residue chain is Glycerol-3-phosphate acyltransferase (209 aa).

Transmembrane regions (helical) follow at residues 4 to 24, 53 to 75, 80 to 102, 112 to 132, and 138 to 158; these read IAIG…AILI, LAAA…IGYG, PFWL…FFHF, LGAI…TWLL, and GYSS…VWWF.

It belongs to the PlsY family. In terms of assembly, probably interacts with PlsX.

It localises to the cell inner membrane. The catalysed reaction is an acyl phosphate + sn-glycerol 3-phosphate = a 1-acyl-sn-glycero-3-phosphate + phosphate. Its pathway is lipid metabolism; phospholipid metabolism. Catalyzes the transfer of an acyl group from acyl-phosphate (acyl-PO(4)) to glycerol-3-phosphate (G3P) to form lysophosphatidic acid (LPA). This enzyme utilizes acyl-phosphate as fatty acyl donor, but not acyl-CoA or acyl-ACP. The protein is Glycerol-3-phosphate acyltransferase of Sodalis glossinidius (strain morsitans).